A 151-amino-acid polypeptide reads, in one-letter code: Large ribosomal subunit protein uL15 (151 aa).

The protein belongs to the universal ribosomal protein uL15 family. In terms of assembly, part of the 50S ribosomal subunit.

Binds to the 23S rRNA. This is Large ribosomal subunit protein uL15 from Hyperthermus butylicus (strain DSM 5456 / JCM 9403 / PLM1-5).